A 287-amino-acid chain; its full sequence is Eukaryotic translation initiation factor 3 subunit F (287 aa).

The MPN domain occupies 12 to 142; that stretch reads VRVHPVVLFQ…IKAYVCVSLG (131 aa).

It belongs to the eIF-3 subunit F family. As to quaternary structure, component of the eukaryotic translation initiation factor 3 (eIF-3) complex.

Its subcellular location is the cytoplasm. In terms of biological role, component of the eukaryotic translation initiation factor 3 (eIF-3) complex, which is involved in protein synthesis of a specialized repertoire of mRNAs and, together with other initiation factors, stimulates binding of mRNA and methionyl-tRNAi to the 40S ribosome. The eIF-3 complex specifically targets and initiates translation of a subset of mRNAs involved in cell proliferation. This is Eukaryotic translation initiation factor 3 subunit F from Culex quinquefasciatus (Southern house mosquito).